A 62-amino-acid chain; its full sequence is Photosystem II reaction center protein Z (62 aa).

2 helical membrane-spanning segments follow: residues 8 to 28 and 41 to 61; these read ALVA…VAYA and WLGS…NFFV.

The protein belongs to the PsbZ family. As to quaternary structure, PSII is composed of 1 copy each of membrane proteins PsbA, PsbB, PsbC, PsbD, PsbE, PsbF, PsbH, PsbI, PsbJ, PsbK, PsbL, PsbM, PsbT, PsbX, PsbY, PsbZ, Psb30/Ycf12, peripheral proteins PsbO, CyanoQ (PsbQ), PsbU, PsbV and a large number of cofactors. It forms dimeric complexes.

It is found in the cellular thylakoid membrane. Its function is as follows. May control the interaction of photosystem II (PSII) cores with the light-harvesting antenna, regulates electron flow through the 2 photosystem reaction centers. PSII is a light-driven water plastoquinone oxidoreductase, using light energy to abstract electrons from H(2)O, generating a proton gradient subsequently used for ATP formation. In Nostoc sp. (strain PCC 7120 / SAG 25.82 / UTEX 2576), this protein is Photosystem II reaction center protein Z.